We begin with the raw amino-acid sequence, 142 residues long: Pro-Viral epidermal growth factor (142 aa).

A signal peptide spans 1 to 19 (MSIKYLMLLFAAMIIRSLA). The Extracellular portion of the chain corresponds to 20–104 (DSGNAIETTS…DTTTSYIPSL (85 aa)). A glycan (N-linked (GlcNAc...) asparagine; by host) is linked at asparagine 34. A disulfide bridge links cysteine 71 with cysteine 80. Residues 105–125 (GIVLVLVGIIITCCLLSVYMF) traverse the membrane as a helical segment. Residues 126 to 142 (TRRTKLPIQDMVVLYFL) are Cytoplasmic-facing.

The protein belongs to the orthopoxvirus OPG019 family. In terms of assembly, interacts with host EGFR. Post-translationally, cleaved at the cell surface by host ADAM10, thereby releasing the secreted form of VGF.

Its subcellular location is the host membrane. The protein localises to the secreted. Stimulates cellular proliferation (hyperplasia)and mobility around infected cells to promote rapid and efficient spread of infection. This effect is beneficial for virus replication in vivo, because poxviruses replicate possibly better in proliferating cells than in quiescent cells. Acts by binding host EGFR, inducing its dimerization, autophosphorylation and leading to activation of several cellular pathways regulating cell proliferation or cell survival. The activation by host EGFR of mitogen activated protein kinases (MAPK) and extracellular-signal regulated kinases (ERK) are essential for the positive effect of vaccinia growth factor on poxvirus virulence in vivo. This Cynomys gunnisoni (Gunnison's prairie dog) protein is Pro-Viral epidermal growth factor (OPG019).